The following is a 402-amino-acid chain: MSRVSQARNLGKYFLLIDNMLVVLGFFVVFPLISIRFVDQMGWAAVMVGIALGLRQFIQQGLGIFGGAIADRFGAKPMIVTGMLMRAAGFATMGIAHEPWLLWFSCLLSGLGGTLFDPPRSALVVKLIRPQQRGRFFSLLMMQDSAGAVIGALLGSWLLQYDFRLVCATGAVLFVLCAAFNAWLLPAWKLSTVRTPVREGMTRVMRDKRFVTYVLTLAGYYMLAVQVMLMLPIMVNDVAGAPSAVKWMYAIEACLSLTLLYPIARWSEKHFRLEHRLMAGLLIMSLSMMPVGMVSGLQQLFTLICLFYIGSIIAEPARETLSASLADARARGSYMGFSRLGLAIGGAIGYIGGGWLFDLGKSAHQPELPWMMLGIIGIFTFLALGWQFSQKRAARRLLERDA.

Residues 1-12 are Cytoplasmic-facing; the sequence is MSRVSQARNLGK. A helical transmembrane segment spans residues 13–33; it reads YFLLIDNMLVVLGFFVVFPLI. At 34-98 the chain is on the periplasmic side; sequence SIRFVDQMGW…GFATMGIAHE (65 aa). The chain crosses the membrane as a helical span at residues 99 to 116; that stretch reads PWLLWFSCLLSGLGGTLF. The Cytoplasmic segment spans residues 117 to 138; that stretch reads DPPRSALVVKLIRPQQRGRFFS. A helical membrane pass occupies residues 139–159; the sequence is LLMMQDSAGAVIGALLGSWLL. Topologically, residues 160–164 are periplasmic; that stretch reads QYDFR. The chain crosses the membrane as a helical span at residues 165–185; it reads LVCATGAVLFVLCAAFNAWLL. The Cytoplasmic portion of the chain corresponds to 186–213; sequence PAWKLSTVRTPVREGMTRVMRDKRFVTY. The chain crosses the membrane as a helical span at residues 214–234; it reads VLTLAGYYMLAVQVMLMLPIM. Residues 235–243 lie on the Periplasmic side of the membrane; that stretch reads VNDVAGAPS. The chain crosses the membrane as a helical span at residues 244-264; it reads AVKWMYAIEACLSLTLLYPIA. Residues 265-276 lie on the Cytoplasmic side of the membrane; that stretch reads RWSEKHFRLEHR. A helical membrane pass occupies residues 277–297; sequence LMAGLLIMSLSMMPVGMVSGL. At 298-299 the chain is on the periplasmic side; that stretch reads QQ. A helical membrane pass occupies residues 300–320; sequence LFTLICLFYIGSIIAEPARET. Residues 321–339 lie on the Cytoplasmic side of the membrane; it reads LSASLADARARGSYMGFSR. Residues 340-360 traverse the membrane as a helical segment; that stretch reads LGLAIGGAIGYIGGGWLFDLG. At 361–367 the chain is on the periplasmic side; it reads KSAHQPE. The chain crosses the membrane as a helical span at residues 368 to 388; it reads LPWMMLGIIGIFTFLALGWQF. Over 389–402 the chain is Cytoplasmic; it reads SQKRAARRLLERDA.

Belongs to the major facilitator superfamily. DHA1 family. MdtH (TC 2.A.1.2.21) subfamily.

It localises to the cell inner membrane. In terms of biological role, confers resistance to norfloxacin and enoxacin. The chain is Multidrug resistance protein MdtH from Escherichia coli O139:H28 (strain E24377A / ETEC).